The following is a 375-amino-acid chain: Membrane progesterone receptor epsilon (375 aa).

The interval 1 to 39 is disordered; it reads MPRRLQQRGAGVKGPPASTSRRSHPASASAPRSPPAATT. Over 1-84 the chain is Cytoplasmic; sequence MPRRLQQRGA…VLKPTNETLN (84 aa). A compositionally biased stretch (low complexity) spans 15-39; it reads PPASTSRRSHPASASAPRSPPAATT. The chain crosses the membrane as a helical span at residues 85 to 105; that stretch reads FWTHFIPLLLFLSKFCRLFFL. Topologically, residues 106-114 are extracellular; that stretch reads GGSDVPFHH. A helical transmembrane segment spans residues 115–135; that stretch reads PWLLPLWCYASGVLLTFAMSC. At 136–160 the chain is on the cytoplasmic side; that stretch reads TAHVFSCLSLRLRAAFFYLDYASIS. The helical transmembrane segment at 161–181 threads the bilayer; the sequence is YYGFGSTVAYYYYLLPSLSLL. Over 182–203 the chain is Extracellular; sequence DARVMTPYVQQRLGWHVDCTRL. A helical membrane pass occupies residues 204 to 224; sequence IAVYRALVLPVAFVLAVACTV. Over 225–241 the chain is Cytoplasmic; the sequence is ACCKSRTDWCSYPFALR. A helical membrane pass occupies residues 242-262; that stretch reads TFVFVMPLSMACPIMLESWLF. Over 263-299 the chain is Extracellular; it reads DLRGENPTLFVHFYRRYFWLVVAAFFNVSKIPERIQP. A helical membrane pass occupies residues 300-320; that stretch reads GLFDIIGHSHQLFHIFTFLSI. At 321-341 the chain is on the cytoplasmic side; that stretch reads YDQVYYVEEGLRQFLQAPPAA. A helical transmembrane segment spans residues 342 to 362; it reads PTFSGTVGYMLLLVVCLGLVI. The Extracellular portion of the chain corresponds to 363–375; sequence RKFLNSTEFCSKK.

The protein belongs to the ADIPOR family. In terms of assembly, homodimer.

It is found in the cell membrane. Its function is as follows. Plasma membrane progesterone (P4) receptor coupled to G proteins. Seems to act through a G(s) mediated pathway. May be involved in regulating rapid P4 signaling in the nervous system. Also binds dehydroepiandrosterone (DHEA), pregnanolone, pregnenolone and allopregnanolone. This chain is Membrane progesterone receptor epsilon, found in Mus musculus (Mouse).